Reading from the N-terminus, the 331-residue chain is NADH-ubiquinone oxidoreductase chain 1 (331 aa).

A run of 8 helical transmembrane segments spans residues 8–28 (LLEI…MTVI), 75–95 (LFFL…GVIP), 107–127 (LGIL…LFAG), 147–167 (ISYE…CGTF), 178–198 (SVWY…SALA), 224–244 (GMIF…MSTF), 266–286 (FINL…FLFV), and 308–328 (MLPV…AFDI).

It belongs to the complex I subunit 1 family.

The protein localises to the mitochondrion inner membrane. It catalyses the reaction a ubiquinone + NADH + 5 H(+)(in) = a ubiquinol + NAD(+) + 4 H(+)(out). In terms of biological role, core subunit of the mitochondrial membrane respiratory chain NADH dehydrogenase (Complex I) that is believed to belong to the minimal assembly required for catalysis. Complex I functions in the transfer of electrons from NADH to the respiratory chain. The immediate electron acceptor for the enzyme is believed to be ubiquinone. The polypeptide is NADH-ubiquinone oxidoreductase chain 1 (ND1) (Mycosarcoma maydis (Corn smut fungus)).